A 396-amino-acid chain; its full sequence is MSSIKETLEIIKRGADEVLIEEELIKKLQKHKPLIIKFGCDPTAPDIHLGHTVVINKLKQLQDLGHKIHFLIGDFTAQIGDPTGKNATRPPLTAEEVAANAETYTKQVFKILDKDKTIIRRNGDWFNKMSASEMIKLASKSTVARMLERDDFSKRYKGGQSISIHEFLYPLVQGYDSVAMNADIELGGTDQKFNLLMGRELQKQQGQEPQVIITMPLLEGLDGVKKMSKSSQNYIGIEEPANEIFGKIMSISDEFMWRYYELLSFKSLENIAKLKQDVAAGANPRDIKIELAKELIERFHSKEDAESAHQDFIQRFQKNQIPDDINVVELNQELPIANLLKEAGLVASTSEANRMIQQGAVKIDGEKLSDAKIIFAKGTNNVFQVGKRKFAKIIIK.

The short motif at P42–H51 is the 'HIGH' region element. Positions K226–S230 match the 'KMSKS' region motif. K229 contributes to the ATP binding site. Positions L334–I395 constitute an S4 RNA-binding domain.

This sequence belongs to the class-I aminoacyl-tRNA synthetase family. TyrS type 2 subfamily. Homodimer.

Its subcellular location is the cytoplasm. The enzyme catalyses tRNA(Tyr) + L-tyrosine + ATP = L-tyrosyl-tRNA(Tyr) + AMP + diphosphate + H(+). Functionally, catalyzes the attachment of tyrosine to tRNA(Tyr) in a two-step reaction: tyrosine is first activated by ATP to form Tyr-AMP and then transferred to the acceptor end of tRNA(Tyr). The chain is Tyrosine--tRNA ligase from Francisella tularensis subsp. tularensis (strain SCHU S4 / Schu 4).